Reading from the N-terminus, the 461-residue chain is UDP-glycosyltransferase 82A1 (461 aa).

Residues serine 292, alanine 349–glutamine 351, histidine 366–glutamate 374, and alanine 388–glutamine 391 contribute to the UDP-alpha-D-glucose site.

The protein belongs to the UDP-glycosyltransferase family.

The protein is UDP-glycosyltransferase 82A1 (UGT82A1) of Arabidopsis thaliana (Mouse-ear cress).